A 354-amino-acid polypeptide reads, in one-letter code: DNA polymerase IV (354 aa).

One can recognise a UmuC domain in the interval 6–187; it reads IIHIDCDCFY…LPVTKLHGVG (182 aa). D10 and D105 together coordinate Mg(2+). E106 is an active-site residue.

It belongs to the DNA polymerase type-Y family. In terms of assembly, monomer. It depends on Mg(2+) as a cofactor.

The protein localises to the cytoplasm. It carries out the reaction DNA(n) + a 2'-deoxyribonucleoside 5'-triphosphate = DNA(n+1) + diphosphate. Functionally, poorly processive, error-prone DNA polymerase involved in untargeted mutagenesis. Copies undamaged DNA at stalled replication forks, which arise in vivo from mismatched or misaligned primer ends. These misaligned primers can be extended by PolIV. Exhibits no 3'-5' exonuclease (proofreading) activity. May be involved in translesional synthesis, in conjunction with the beta clamp from PolIII. This Pseudomonas syringae pv. syringae (strain B728a) protein is DNA polymerase IV.